The chain runs to 541 residues: Mesoderm induction early response protein 2 (541 aa).

Serine 11 carries the post-translational modification Phosphoserine. Disordered stretches follow at residues 100 to 119 (DPIS…LPDM) and 131 to 186 (LSGE…EEDA). Residues 140-165 (QSSADDLTPSVTSHEASDLFHNQSGS) show a composition bias toward polar residues. Residues 194–291 (KEIMVGPQFQ…EALRRLRFNV (98 aa)) enclose the ELM2 domain. An SANT domain is found at 296–348 (DGLCAWSEEECRNFEHGFRVHGKNFHLIQANKVRTRSVGECVEYYYLWKKSER). Residues 364–440 (VSSGTTDTEQ…EPPAVPSLQQ (77 aa)) form a disordered region.

Part of a complex containing at least CDYL, MIER1, MIER2, HDAC1 and HDAC2.

The protein localises to the nucleus. Functionally, transcriptional repressor. The chain is Mesoderm induction early response protein 2 (Mier2) from Mus musculus (Mouse).